A 365-amino-acid chain; its full sequence is Peptide chain release factor 2 (365 aa).

Glutamine 252 is subject to N5-methylglutamine.

Belongs to the prokaryotic/mitochondrial release factor family. Methylated by PrmC. Methylation increases the termination efficiency of RF2.

It is found in the cytoplasm. Functionally, peptide chain release factor 2 directs the termination of translation in response to the peptide chain termination codons UGA and UAA. This is Peptide chain release factor 2 from Shewanella woodyi (strain ATCC 51908 / MS32).